The chain runs to 170 residues: Urease accessory protein UreE (170 aa).

It belongs to the UreE family.

The protein localises to the cytoplasm. Involved in urease metallocenter assembly. Binds nickel. Probably functions as a nickel donor during metallocenter assembly. The polypeptide is Urease accessory protein UreE (Helicobacter pylori (strain ATCC 700392 / 26695) (Campylobacter pylori)).